Consider the following 341-residue polypeptide: Holliday junction branch migration complex subunit RuvB (341 aa).

A disordered region spans residues 1–21; the sequence is MSQPDPMLRPEPLESDGEDRA. The interval 4 to 183 is large ATPase domain (RuvB-L); that stretch reads PDPMLRPEPL…FGIPTRLQFY (180 aa). ATP-binding positions include Leu22, Arg23, Gly64, Lys67, Thr68, Thr69, 130–132, Arg173, Tyr183, and Arg220; that span reads EDF. Thr68 serves as a coordination point for Mg(2+). The segment at 184 to 254 is small ATPAse domain (RuvB-S); the sequence is TIEELDLIVT…IADSALTRLG (71 aa). The interval 257-341 is head domain (RuvB-H); it reads HLGLDTADRR…PRTQESLFDE (85 aa). Residues Arg293, Arg312, and Arg317 each coordinate DNA.

It belongs to the RuvB family. As to quaternary structure, homohexamer. Forms an RuvA(8)-RuvB(12)-Holliday junction (HJ) complex. HJ DNA is sandwiched between 2 RuvA tetramers; dsDNA enters through RuvA and exits via RuvB. An RuvB hexamer assembles on each DNA strand where it exits the tetramer. Each RuvB hexamer is contacted by two RuvA subunits (via domain III) on 2 adjacent RuvB subunits; this complex drives branch migration. In the full resolvosome a probable DNA-RuvA(4)-RuvB(12)-RuvC(2) complex forms which resolves the HJ.

The protein localises to the cytoplasm. The enzyme catalyses ATP + H2O = ADP + phosphate + H(+). Its function is as follows. The RuvA-RuvB-RuvC complex processes Holliday junction (HJ) DNA during genetic recombination and DNA repair, while the RuvA-RuvB complex plays an important role in the rescue of blocked DNA replication forks via replication fork reversal (RFR). RuvA specifically binds to HJ cruciform DNA, conferring on it an open structure. The RuvB hexamer acts as an ATP-dependent pump, pulling dsDNA into and through the RuvAB complex. RuvB forms 2 homohexamers on either side of HJ DNA bound by 1 or 2 RuvA tetramers; 4 subunits per hexamer contact DNA at a time. Coordinated motions by a converter formed by DNA-disengaged RuvB subunits stimulates ATP hydrolysis and nucleotide exchange. Immobilization of the converter enables RuvB to convert the ATP-contained energy into a lever motion, pulling 2 nucleotides of DNA out of the RuvA tetramer per ATP hydrolyzed, thus driving DNA branch migration. The RuvB motors rotate together with the DNA substrate, which together with the progressing nucleotide cycle form the mechanistic basis for DNA recombination by continuous HJ branch migration. Branch migration allows RuvC to scan DNA until it finds its consensus sequence, where it cleaves and resolves cruciform DNA. This Paracoccus denitrificans (strain Pd 1222) protein is Holliday junction branch migration complex subunit RuvB.